A 434-amino-acid polypeptide reads, in one-letter code: Isocitrate lyase (434 aa).

91–93 (SGW) provides a ligand contact to substrate. A Mg(2+)-binding site is contributed by aspartate 157. Cysteine 195 serves as the catalytic Proton acceptor. Residues 196–197 (GH), arginine 232, 317–321 (NCSPS), and threonine 351 contribute to the substrate site.

Belongs to the isocitrate lyase/PEP mutase superfamily. Isocitrate lyase family. As to quaternary structure, homotetramer. Requires Mg(2+) as cofactor.

The enzyme catalyses D-threo-isocitrate = glyoxylate + succinate. Its pathway is carbohydrate metabolism; glyoxylate cycle; (S)-malate from isocitrate: step 1/2. Functionally, involved in the metabolic adaptation in response to environmental changes. Catalyzes the reversible formation of succinate and glyoxylate from isocitrate, a key step of the glyoxylate cycle, which operates as an anaplerotic route for replenishing the tricarboxylic acid cycle during growth on fatty acid substrates. This chain is Isocitrate lyase (aceA), found in Salmonella typhimurium (strain LT2 / SGSC1412 / ATCC 700720).